The following is a 321-amino-acid chain: Methionyl-tRNA formyltransferase (321 aa).

Position 112 to 115 (Ser112 to Pro115) interacts with (6S)-5,6,7,8-tetrahydrofolate.

The protein belongs to the Fmt family.

The enzyme catalyses L-methionyl-tRNA(fMet) + (6R)-10-formyltetrahydrofolate = N-formyl-L-methionyl-tRNA(fMet) + (6S)-5,6,7,8-tetrahydrofolate + H(+). Its function is as follows. Attaches a formyl group to the free amino group of methionyl-tRNA(fMet). The formyl group appears to play a dual role in the initiator identity of N-formylmethionyl-tRNA by promoting its recognition by IF2 and preventing the misappropriation of this tRNA by the elongation apparatus. The sequence is that of Methionyl-tRNA formyltransferase from Shewanella piezotolerans (strain WP3 / JCM 13877).